Reading from the N-terminus, the 88-residue chain is Putative membrane protein insertion efficiency factor (88 aa).

The interval 68–88 (VPPKKDKNADSEHSCKVHHHH) is disordered. A compositionally biased stretch (basic and acidic residues) spans 69–82 (PPKKDKNADSEHSC).

This sequence belongs to the UPF0161 family.

Its subcellular location is the cell membrane. Could be involved in insertion of integral membrane proteins into the membrane. The chain is Putative membrane protein insertion efficiency factor from Listeria monocytogenes serovar 1/2a (strain ATCC BAA-679 / EGD-e).